We begin with the raw amino-acid sequence, 481 residues long: 3-isopropylmalate dehydratase large subunit (481 aa).

[4Fe-4S] cluster-binding residues include Cys355, Cys415, and Cys418.

The protein belongs to the aconitase/IPM isomerase family. LeuC type 1 subfamily. In terms of assembly, heterodimer of LeuC and LeuD. It depends on [4Fe-4S] cluster as a cofactor.

The enzyme catalyses (2R,3S)-3-isopropylmalate = (2S)-2-isopropylmalate. It participates in amino-acid biosynthesis; L-leucine biosynthesis; L-leucine from 3-methyl-2-oxobutanoate: step 2/4. Functionally, catalyzes the isomerization between 2-isopropylmalate and 3-isopropylmalate, via the formation of 2-isopropylmaleate. The chain is 3-isopropylmalate dehydratase large subunit from Symbiobacterium thermophilum (strain DSM 24528 / JCM 14929 / IAM 14863 / T).